A 487-amino-acid polypeptide reads, in one-letter code: RCC1 repeat-containing protein DDB_G0284033 (487 aa).

RCC1 repeat units lie at residues 66–127, 207–259, 260–313, 373–426, and 428–483; these read SNKV…FSGY, RSLI…ALSN, DGKL…ALTS, NGNI…IVET, and DGRF…SLNS.

The protein is RCC1 repeat-containing protein DDB_G0284033 of Dictyostelium discoideum (Social amoeba).